The following is a 421-amino-acid chain: MIKVLKKKLIVGLEIGTTKTTISVGEILEDDTINIIGIGLSKSIGIDRGIINDLKSIVECIKKVINQAETMANCNITSIYLALSNKYINCQNEIGIIPILQEEITKNDIENVIHTAKSVRIRNEHKILHIIPQEYSIDERTGIKNPIGLSGIRMQAIVHLITCHSSIKKNIIKAVESCGIRVDYSVFSGLASSESVLTTDERNLGVCIVDIGGGTTDIAIYTNGTLKHSCVIPYAGNTVTNDISYVFNIPFMYAEKIKIKYGYAMQSSDITEEEIKIVNEDNTIIQTFHKDKLTEVIESRYIELLTLINEEIKNTQKKLKKSGRIHKLGAGIVLTGGASNIKLFKNCAEKVFNIPVRIGCPKKNNINTAKLTNNTQTGSLSTVIGLLYFGKKYFYSHRNKNSYNFFKKWLQYINNWIKKEF.

This sequence belongs to the FtsA/MreB family. As to quaternary structure, self-interacts. Interacts with FtsZ.

It is found in the cell membrane. In terms of biological role, cell division protein that is involved in the assembly of the Z ring. May serve as a membrane anchor for the Z ring. This is Cell division protein FtsA from Buchnera aphidicola subsp. Baizongia pistaciae (strain Bp).